A 609-amino-acid polypeptide reads, in one-letter code: QWRF motif-containing protein 4 (609 aa).

Disordered regions lie at residues 1–227 (MQVG…IRGN) and 271–369 (EVSS…TAQS). Polar residues-rich tracts occupy residues 11 to 21 (GKQQQSVSDAT) and 46 to 57 (EVSSRYRSPTPT). Low complexity-rich tracts occupy residues 98–110 (PVSD…PVSS) and 129–143 (SLSV…SVPV). Polar residues predominate over residues 151 to 180 (VTSSTDRTLRPSSSNIAHKQQSETTSVTRK). Composition is skewed to low complexity over residues 271 to 285 (EVSS…SSTE) and 302 to 332 (SAPG…PSRG). The QWRF motif motif lies at 407–410 (QWRF). A disordered region spans residues 588 to 609 (EEEVRDDAESSPLLPLSKFQWP).

It belongs to the QWRF family.

This chain is QWRF motif-containing protein 4 (QWRF4), found in Arabidopsis thaliana (Mouse-ear cress).